Here is a 201-residue protein sequence, read N- to C-terminus: Recombination protein RecR (201 aa).

The C4-type zinc-finger motif lies at 55–70 (CVCCGAFCEGRTCALC). A Toprim domain is found at 78–173 (GIICVVERAQ…IVTRLASGIP (96 aa)).

The protein belongs to the RecR family.

May play a role in DNA repair. It seems to be involved in an RecBC-independent recombinational process of DNA repair. It may act with RecF and RecO. The chain is Recombination protein RecR from Treponema pallidum (strain Nichols).